Here is a 385-residue protein sequence, read N- to C-terminus: MTAISLGMPAVPTKLADRRVSRQIQVGTVAVGGDAPVSVQSMTTTRTSDIGATLQQIAELTASGCQIVRVACPTQDDADALATIARKSQIPVIADIHFQPKYVFAAIDAGCAAVRVNPGNIKQFDDKVKEIAKAASETRTPIRIGVNAGSLDARLLKKYGKATPEALVESALWEASLFEEHGFGDIKISVKHNDPVVMVNAYRQLAAQSDYPLHLGVTEAGPAFQGTIKSAVAFGALLSEGIGDTIRVSLSAPPAEEVKVGLQILEALNLKQRRLEIVSCPSCGRAQVDVYKLADQVSAGLEGMEVPLRVAVMGCVVNGPGEAREADLGVASGNGKGQIFVKGEVIKTVPESKIVETLIEEALKIAEQMEKDGIASGEPQVSIGA.

Cysteine 280, cysteine 283, cysteine 315, and glutamate 322 together coordinate [4Fe-4S] cluster.

This sequence belongs to the IspG family. [4Fe-4S] cluster is required as a cofactor.

It carries out the reaction (2E)-4-hydroxy-3-methylbut-2-enyl diphosphate + oxidized [flavodoxin] + H2O + 2 H(+) = 2-C-methyl-D-erythritol 2,4-cyclic diphosphate + reduced [flavodoxin]. It functions in the pathway isoprenoid biosynthesis; isopentenyl diphosphate biosynthesis via DXP pathway; isopentenyl diphosphate from 1-deoxy-D-xylulose 5-phosphate: step 5/6. In terms of biological role, converts 2C-methyl-D-erythritol 2,4-cyclodiphosphate (ME-2,4cPP) into 1-hydroxy-2-methyl-2-(E)-butenyl 4-diphosphate. The sequence is that of 4-hydroxy-3-methylbut-2-en-1-yl diphosphate synthase (flavodoxin) from Streptomyces griseus subsp. griseus (strain JCM 4626 / CBS 651.72 / NBRC 13350 / KCC S-0626 / ISP 5235).